The primary structure comprises 81 residues: MSHSVKIYDTCIGCTQCVRACPTDVLEMIPWDGCKAKQIASAPRTEDCVGCKRCESACPTDFLSVRVYLRSETTRSMALSY.

2 consecutive 4Fe-4S ferredoxin-type domains span residues 2-31 (SHSV…MIPW) and 39-68 (IASA…VRVY). Positions 11, 14, 17, 21, 48, 51, 54, and 58 each coordinate [4Fe-4S] cluster.

In terms of assembly, the eukaryotic PSI reaction center is composed of at least 11 subunits. [4Fe-4S] cluster is required as a cofactor.

Its subcellular location is the plastid. It localises to the chloroplast thylakoid membrane. The enzyme catalyses reduced [plastocyanin] + hnu + oxidized [2Fe-2S]-[ferredoxin] = oxidized [plastocyanin] + reduced [2Fe-2S]-[ferredoxin]. In terms of biological role, apoprotein for the two 4Fe-4S centers FA and FB of photosystem I (PSI); essential for photochemical activity. FB is the terminal electron acceptor of PSI, donating electrons to ferredoxin. The C-terminus interacts with PsaA/B/D and helps assemble the protein into the PSI complex. Required for binding of PsaD and PsaE to PSI. PSI is a plastocyanin-ferredoxin oxidoreductase, converting photonic excitation into a charge separation, which transfers an electron from the donor P700 chlorophyll pair to the spectroscopically characterized acceptors A0, A1, FX, FA and FB in turn. This is Photosystem I iron-sulfur center from Sorghum bicolor (Sorghum).